Consider the following 1322-residue polypeptide: Centrosome-associated protein Alms1a (1322 aa).

Disordered regions lie at residues 1–26 (MRAK…ESSR), 53–135 (TASS…SEVT), 165–193 (SQSA…SVLK), 252–442 (EEPS…NSVY), 464–614 (KHNQ…GSRP), 657–752 (ESST…ASTD), 814–844 (SKSQ…KERP), 856–911 (AEAE…LNQR), and 1083–1109 (ASAT…SSMM). Low complexity predominate over residues 53 to 62 (TASSGASGST). The span at 78–111 (MEHESRPESGHRRRTKSSDHRSPDERGEAKEQLR) shows a compositional bias: basic and acidic residues. Residues 165–189 (SQSAEDIRTPTKSPQMQNKKTQTPE) show a composition bias toward polar residues. Positions 279-292 (SLNSGMESSLSSNK) are enriched in low complexity. Positions 309 to 318 (EVSSCQTDCR) are enriched in polar residues. Residues 319–330 (SSSQKESTQGSS) show a composition bias toward low complexity. Residues 338-350 (NFTTEGTQCSYNR) are compositionally biased toward polar residues. Positions 354–364 (EIDSIMEEEES) are enriched in acidic residues. 2 stretches are compositionally biased toward basic and acidic residues: residues 365–375 (IDRRKKDDLRI) and 394–408 (SRRE…DDSR). Over residues 409–430 (LNSPNSSRLGSEVSSRVESSRS) the composition is skewed to low complexity. Composition is skewed to basic and acidic residues over residues 464–487 (KHNQ…EQHQ), 495–512 (PKGR…REQQ), and 519–538 (RDQR…EREQ). Low complexity-rich tracts occupy residues 594-605 (STGVTASTSTTS) and 657-669 (ESST…SSSS). The span at 678 to 696 (GSLQQVAATNTNQSNARSS) shows a compositional bias: polar residues. Residues 714 to 735 (AIGSSSPLPESVSYSGSTSGSG) are compositionally biased toward low complexity. Composition is skewed to polar residues over residues 737–751 (VITQ…NAST) and 822–832 (TESATAAQIPS). The segment covering 893-907 (LPAPPPTQPPPPPPH) has biased composition (pro residues). Over residues 1092–1107 (SAITRSTTTTTNSSSS) the composition is skewed to low complexity. The interaction with Klp10A stretch occupies residues 1115–1322 (MSVPMGMMNT…ISLNHSMAIM (208 aa)). Residues 1190–1309 (SLQDQLQLAR…FNKRLKSRVA (120 aa)) form an ALMS motif region.

The protein belongs to the ALMS1 family. Interacts (via C-terminus) with Klp10A. Interacts with SAK. As to expression, expressed in all germlines, including germline stem cells and spermatogonia.

The protein localises to the cytoplasm. The protein resides in the cytoskeleton. It localises to the microtubule organizing center. It is found in the centrosome. Its subcellular location is the centriole. Functionally, in asymmetrically dividing germline stem cells (GSCs), plays a critical role in ensuring centrosome duplication, which is essential for the production of centrosomes and centrioles in all downstream germ cells. Might recruit SAK for daughter centriole duplication. The sequence is that of Centrosome-associated protein Alms1a from Drosophila melanogaster (Fruit fly).